The primary structure comprises 109 residues: Cell division protein ZapA (109 aa).

A coiled-coil region spans residues 71-99; that stretch reads KTRDYASNMEQRIRMLQQTIEQALLEQGR.

It belongs to the ZapA family. Type 1 subfamily. In terms of assembly, homodimer. Interacts with FtsZ.

Its subcellular location is the cytoplasm. In terms of biological role, activator of cell division through the inhibition of FtsZ GTPase activity, therefore promoting FtsZ assembly into bundles of protofilaments necessary for the formation of the division Z ring. It is recruited early at mid-cell but it is not essential for cell division. In Serratia proteamaculans (strain 568), this protein is Cell division protein ZapA.